The sequence spans 243 residues: Probable transcriptional regulatory protein TTE1135 (243 aa).

The protein belongs to the TACO1 family.

The protein localises to the cytoplasm. In Caldanaerobacter subterraneus subsp. tengcongensis (strain DSM 15242 / JCM 11007 / NBRC 100824 / MB4) (Thermoanaerobacter tengcongensis), this protein is Probable transcriptional regulatory protein TTE1135.